The sequence spans 315 residues: Replication-associated protein VP4 (315 aa).

Active-site O-(5'-phospho-DNA)-tyrosine intermediate residues include Tyr176 and Tyr180. A coiled-coil region spans residues 253 to 315 (EYDAKVKLKS…FKQLQEKLKL (63 aa)).

It belongs to the microviridae Rep protein family.

It carries out the reaction ATP + (deoxyribonucleotide)n-3'-hydroxyl + 5'-phospho-(deoxyribonucleotide)m = (deoxyribonucleotide)n+m + AMP + diphosphate.. Functionally, plays an essential role in viral DNA replication. Binds the origin of replication and cleaves the dsDNA replicative form I (RFI) and becomes covalently bound to it via phosphotyrosine bond, generating the dsDNA replicative form II (RFII). In turn, viral DNA replication initiates at the 3'-OH of the cleavage site. After one round of rolling circle synthesis, protein VP4 is linked to the newly synthesized ssDNA and joins the ends of the displaced strand to generate a circular single-stranded molecule ready to be packed into a virion. In Bdellovibrio bacteriovorus (Bacteriophage phiMH2K), this protein is Replication-associated protein VP4.